The primary structure comprises 410 residues: MQQRNRLEPYFENLVFERDDNKMVVNFGPQHPSAHGQLRLILEMDGEQITKAVPDIGYLHRGMEKMGENMIYNEFLPTTDRMDYIAATSNNYAFALAVERLLGIEDKVPRRAKVIRMILLELNRIISHLFWLATHALDVGAMSVFLYCFREREYAMDLIEDYCGARLTHSSVRIGGVPLDLPEGWLDRLNVYLNNLPDQIKLYEGLLTENRIWRMRLEEVGVIPPEMAKQWACSGIMLRGSGIEYDIRKEEPYELYDEVDFDIPVSDRCDSYGRYLLYMEEMRQSIRIIRQLIPMYKETEPQLMAHAPEYISAHKEDIMTQNYSLMQHFVLVTQGMRPPVGEVYVPTESPKGELGFFIRSEGEPYPYRLKIRAPSFWHTGILQDLLPGHYLADVVTIIGSTNIVFGEIDR.

The protein belongs to the complex I 49 kDa subunit family. As to quaternary structure, NDH-1 is composed of 14 different subunits. Subunits NuoB, C, D, E, F, and G constitute the peripheral sector of the complex.

The protein localises to the cell inner membrane. The catalysed reaction is a quinone + NADH + 5 H(+)(in) = a quinol + NAD(+) + 4 H(+)(out). Its function is as follows. NDH-1 shuttles electrons from NADH, via FMN and iron-sulfur (Fe-S) centers, to quinones in the respiratory chain. The immediate electron acceptor for the enzyme in this species is believed to be ubiquinone. Couples the redox reaction to proton translocation (for every two electrons transferred, four hydrogen ions are translocated across the cytoplasmic membrane), and thus conserves the redox energy in a proton gradient. This is NADH-quinone oxidoreductase subunit D from Nitratiruptor sp. (strain SB155-2).